A 539-amino-acid polypeptide reads, in one-letter code: uncharacterized protein (539 aa).

The active-site Acyl-ester intermediate is S216.

This sequence belongs to the type-B carboxylesterase/lipase family.

It localises to the cytoplasm. The protein resides in the nucleus. This is an uncharacterized protein from Schizosaccharomyces pombe (strain 972 / ATCC 24843) (Fission yeast).